We begin with the raw amino-acid sequence, 253 residues long: Blue-light photoreceptor (253 aa).

Residues 6–79 (QFDVILKALN…AKIRHAINEK (74 aa)) form the PAS domain. The residue at position 56 (C56) is an S-4a-FMN cysteine. In terms of domain architecture, PAC spans 80 to 133 (STANVLLKNYRKDGTSFMNELTIEPIYDDHEHLYFVGIQKDVTTEHDYQLELEK). The STAS domain occupies 142–253 (STPIVPIKEN…STIKEALQFY (112 aa)).

Post-translationally, FMN binds covalently to cysteine after exposure to blue light and this bond is spontaneously broken in the dark.

In terms of biological role, exhibits the same spectroscopical features and blue-light induced photochemistry as plants phototropins, with the reversible formation of a blue-shifted photoproduct, assigned to an FMN-cysteine thiol adduct. Positive regulator in the activation of the general stress transcription factor sigma-B. In Listeria monocytogenes serovar 1/2a (strain ATCC BAA-679 / EGD-e), this protein is Blue-light photoreceptor.